A 159-amino-acid chain; its full sequence is Ribosome maturation factor RimP (159 aa).

Belongs to the RimP family.

It is found in the cytoplasm. Its function is as follows. Required for maturation of 30S ribosomal subunits. The sequence is that of Ribosome maturation factor RimP from Lacticaseibacillus casei (strain BL23) (Lactobacillus casei).